A 430-amino-acid chain; its full sequence is Dihydrolipoyllysine-residue acetyltransferase component of pyruvate dehydrogenase complex (430 aa).

Residues 2-77 (AFEFRLPDIG…VVGDVIVKID (76 aa)) form the Lipoyl-binding domain. An N6-lipoyllysine modification is found at Lys43. The tract at residues 80–122 (DAEDMQFKGHDDDSSSKEEPAKEEAPAEQAPVATQTEEVDENR) is disordered. Positions 84-104 (MQFKGHDDDSSSKEEPAKEEA) are enriched in basic and acidic residues. A Peripheral subunit-binding (PSBD) domain is found at 125-162 (KAMPSVRKYAREKGVNIKAVSGSGKNGRITKEDVDAYL). Residues 165–199 (GAPTASNESAASATNEEVAETPAAPAAVSLEGDFP) are disordered. Low complexity predominate over residues 168 to 192 (TASNESAASATNEEVAETPAAPAAV). His401 is a catalytic residue.

Belongs to the 2-oxoacid dehydrogenase family. Forms a 24-polypeptide structural core with octahedral symmetry. Requires (R)-lipoate as cofactor.

The catalysed reaction is N(6)-[(R)-dihydrolipoyl]-L-lysyl-[protein] + acetyl-CoA = N(6)-[(R)-S(8)-acetyldihydrolipoyl]-L-lysyl-[protein] + CoA. Functionally, the pyruvate dehydrogenase complex catalyzes the overall conversion of pyruvate to acetyl-CoA and CO(2). It contains multiple copies of three enzymatic components: pyruvate dehydrogenase (E1), dihydrolipoamide acetyltransferase (E2) and lipoamide dehydrogenase (E3). The sequence is that of Dihydrolipoyllysine-residue acetyltransferase component of pyruvate dehydrogenase complex (pdhC) from Staphylococcus aureus (strain MRSA252).